The sequence spans 308 residues: Cell division protein FtsQ (308 aa).

The segment at 1 to 28 (MQSLSFPPNRRTPRLAPPRRETGRRDPA) is disordered. Residues 1 to 46 (MQSLSFPPNRRTPRLAPPRRETGRRDPAPSRWAYRAQRLWLTPMFR) are Cytoplasmic-facing. Positions 18–28 (PRRETGRRDPA) are enriched in basic and acidic residues. A helical membrane pass occupies residues 47 to 67 (TALRVGLPIVGVLLVVALIFA). Over 68–308 (SADRRAAMAG…RGIDTSGSDL (241 aa)) the chain is Periplasmic. Positions 92 to 160 (FMVTLLSVDG…GLLEVRVTER (69 aa)) constitute a POTRA domain.

The protein belongs to the FtsQ/DivIB family. FtsQ subfamily.

Its subcellular location is the cell inner membrane. Its function is as follows. Essential cell division protein. The sequence is that of Cell division protein FtsQ from Cereibacter sphaeroides (strain ATCC 17023 / DSM 158 / JCM 6121 / CCUG 31486 / LMG 2827 / NBRC 12203 / NCIMB 8253 / ATH 2.4.1.) (Rhodobacter sphaeroides).